The primary structure comprises 83 residues: Omega-agatoxin-Aa4b (83 aa).

A signal peptide spans 1 to 20 (MKLCMTLLITAIAVVTFVVA). The propeptide occupies 21-35 (TQEESAEFNEVEESR). 4 disulfide bridges follow: cysteine 39/cysteine 55, cysteine 47/cysteine 60, cysteine 54/cysteine 71, and cysteine 62/cysteine 69. Serine 81 is subject to D-serine (Ser).

This sequence belongs to the neurotoxin 02 (plectoxin) family. 03 (omega-agtx) subfamily. In terms of processing, the toxin with D-Ser (named omega-aga IVC) is 80-90 fold more potent than that with L-Ser (omega-aga IVB) against Cav2.1/CACNA1A (P-type) channels in rat cerebellar Purkinje neurons and is more resistant to proteases. The epimerization is done by the venom peptide isomerase heterodimer. As to expression, expressed by the venom gland.

The protein localises to the secreted. In terms of biological role, antagonist of voltage-gated Cav2.1/CACNA1A (P-type) calcium channels. Paralyzes insect by blocking neuromuscular transmission. The chain is Omega-agatoxin-Aa4b from Agelenopsis aperta (North American funnel-web spider).